The chain runs to 758 residues: Vitamin K-dependent gamma-carboxylase (758 aa).

A disordered region spans residues 1-34; that stretch reads MAVSARPARAPRGPDKVKKDKAAQTSGPRQGSQM. Residue Ala-2 is modified to N-acetylalanine. The Cytoplasmic portion of the chain corresponds to 2–60; it reads AVSARPARAPRGPDKVKKDKAAQTSGPRQGSQMGKLLGFEWTDVSSWERLVTLLNRPTD. The segment covering 12 to 22 has biased composition (basic and acidic residues); it reads RGPDKVKKDKA. Residues 23 to 33 are compositionally biased toward polar residues; that stretch reads AQTSGPRQGSQ. The chain crosses the membrane as a helical span at residues 61-81; sequence PASLAVFRFLFGLMMVLDIPQ. Residues 82–113 lie on the Lumenal side of the membrane; it reads ERGLSSLDRRYLDGLEVCRFPLLDALQPLPLD. Cys-99 and Cys-450 are oxidised to a cystine. A helical membrane pass occupies residues 114 to 134; it reads WMYLVYTIMFLGALGMMLGLC. The Cytoplasmic segment spans residues 135-136; the sequence is YR. A helical membrane pass occupies residues 137-157; it reads ISCVLFLLPYWYVFLLDKTSW. The Lumenal segment spans residues 158-292; it reads NNHSYLYGLL…VSYFHCMNSQ (135 aa). A helical membrane pass occupies residues 293–313; it reads LFSIGMFPYVMLASSPLFCSP. Topologically, residues 314 to 361 are cytoplasmic; the sequence is EWPRKLVAHCPKKLQELLPLRTAPQPSTSCMYKRSRARGSQKPGLRHQ. A helical membrane pass occupies residues 362 to 382; sequence LSTAFTLLYLLEQLFLPYSHF. Over 383–758 the chain is Lumenal; it reads LTQGYNNWTN…PDSHPVHSEF (376 aa). Residues 726-758 form a disordered region; sequence RPFEPAGEPSPVNTDSSNPNPPEPDSHPVHSEF. A compositionally biased stretch (basic and acidic residues) spans 749–758; it reads PDSHPVHSEF.

The protein belongs to the vitamin K-dependent gamma-carboxylase family. As to quaternary structure, monomer. May interact with CALU.

Its subcellular location is the endoplasmic reticulum membrane. The catalysed reaction is 4-carboxy-L-glutamyl-[protein] + 2,3-epoxyphylloquinone + H2O + H(+) = phylloquinol + L-glutamyl-[protein] + CO2 + O2. Mediates the vitamin K-dependent carboxylation of glutamate residues to calcium-binding gamma-carboxyglutamate (Gla) residues with the concomitant conversion of the reduced hydroquinone form of vitamin K to vitamin K epoxide. Catalyzes gamma-carboxylation of various proteins, such as blood coagulation factors (F2, F7, F9 and F10), osteocalcin (BGLAP) or matrix Gla protein (MGP). The protein is Vitamin K-dependent gamma-carboxylase (GGCX) of Ovis aries (Sheep).